The following is a 277-amino-acid chain: Prohibitin-3, mitochondrial (277 aa).

N-acetylglycine is present on G2. The Mitochondrial matrix portion of the chain corresponds to 2–6 (GSQQA). A helical; Signal-anchor for type II membrane protein transmembrane segment spans residues 7-28 (AVSFLSNLAKAAFGLGTAATVL). Topologically, residues 29–277 (NTSLFTVDGG…GQSMLFALNR (249 aa)) are mitochondrial intermembrane.

The protein belongs to the prohibitin family. Component of a prohibitin multimeric complex in mitochondrial membranes. In terms of tissue distribution, mostly expressed in proliferative tissues, including vasculature, shoot and root apical tissues. Expressed in roots, stems, leaves and flowers (at protein level).

The protein resides in the cell membrane. The protein localises to the mitochondrion inner membrane. It is found in the nucleus. Its subcellular location is the cytoplasm. In terms of biological role, prohibitin probably acts as a holdase/unfoldase for the stabilization of newly synthesized mitochondrial proteins. Necessary for mitochondrial and cell metabolism and biogenesis. Required to regulate the ethylene-mediated signaling; involved in growth maintenance in the presence of ethylene. Functions in nitric oxide (NO)-mediated responses and in hydrogen peroxide-induced NO accumulation. The sequence is that of Prohibitin-3, mitochondrial (PHB3) from Arabidopsis thaliana (Mouse-ear cress).